Reading from the N-terminus, the 863-residue chain is Envelope glycoprotein gp160 (863 aa).

An N-terminal signal peptide occupies residues 1-31 (MRVMGIRMNYQHLWKWGIMLLGILMTCSVAE). Residues 32–691 (DLWVTVYYGV…ITKWLWYIKI (660 aa)) lie on the Extracellular side of the membrane. A disulfide bridge links C53 with C73. N-linked (GlcNAc...) asparagine; by host glycans are attached at residues N87, N129, N136, N142, N143, N159, N163, N194, N199, N209, N246, N274, N288, N301, and N307. Disulfide bonds link C118–C217, C125–C208, C130–C160, C230–C259, and C240–C251. The V1 stretch occupies residues 130–159 (CTNAGGNKTTNGNNTTNQEEQMMEKGEMKN). Residues 160 to 208 (CSFNITTVISDKKKQVHALFYRLDVVPIDDDNSANTSNTNYTNYRLINC) are V2. The tract at residues 308-341 (CTRPDNKITRQSTPIGLGQALYTTRIKGDIRQAY) is V3. C308 and C342 are disulfide-bonded. N343, N350, and N365 each carry an N-linked (GlcNAc...) asparagine; by host glycan. The segment at 374–384 (PAGGDPEITTH) is CD4-binding loop. Cystine bridges form between C388–C452 and C395–C425. The segment at 395-425 (CNTSRLFNSTWNSSTWNNDTLNSEGTIKLPC) is V4. N-linked (GlcNAc...) asparagine; by host glycans are attached at residues N396, N402, N406, N412, N455, N468, N469, and N472. 2 V5 regions span residues 467–478 (VNNSTNETFRPG) and 470–478 (STNETFRPG). Residues 519–539 (AIGLGAVFLGFLGAAGSTMGA) are fusion peptide. Positions 581–599 (KQLQARVLAVESYLKDQQL) are immunosuppression. C605 and C611 are joined by a disulfide. Residues N618, N623, N632, and N644 are each glycosylated (N-linked (GlcNAc...) asparagine; by host). The stretch at 640–674 (REIDNYTGVIYSLIENSQIQQEKNEQDLLQLDKWA) forms a coiled coil. The tract at residues 669–690 (QLDKWASLWNWFSITKWLWYIK) is MPER; binding to GalCer. The helical transmembrane segment at 692-712 (FIMIVGGLIGLRIVFTVLSLV) threads the bilayer. The Cytoplasmic portion of the chain corresponds to 713–863 (NRVRQGYSPL…VRQGLERALL (151 aa)). Positions 719–722 (YSPL) match the YXXL motif; contains endocytosis signal motif. The tract at residues 729–748 (PAPRGPDRPEGIEEEGGEQG) is disordered. A lipid anchor (S-palmitoyl cysteine; by host) is attached at C771. A Di-leucine internalization motif motif is present at residues 862–863 (LL).

Belongs to the HIV-1 env protein family. The mature envelope protein (Env) consists of a homotrimer of non-covalently associated gp120-gp41 heterodimers. The resulting complex protrudes from the virus surface as a spike. There seems to be as few as 10 spikes on the average virion. Interacts with host CD4, CCR5 and CXCR4. Gp120 also interacts with the C-type lectins CD209/DC-SIGN and CLEC4M/DC-SIGNR (collectively referred to as DC-SIGN(R)). Gp120 and gp41 interact with GalCer. Gp120 interacts with host ITGA4/ITGB7 complex; on CD4+ T-cells, this interaction results in rapid activation of integrin ITGAL/LFA-1, which facilitates efficient cell-to-cell spreading of HIV-1. Gp120 interacts with cell-associated heparan sulfate; this interaction increases virus infectivity on permissive cells and may be involved in infection of CD4- cells. In terms of assembly, the mature envelope protein (Env) consists of a homotrimer of non-covalently associated gp120-gp41 heterodimers. The resulting complex protrudes from the virus surface as a spike. There seems to be as few as 10 spikes on the average virion. In terms of processing, highly glycosylated by host. The high number of glycan on the protein is reffered to as 'glycan shield' because it contributes to hide protein sequence from adaptive immune system. Post-translationally, palmitoylation of the transmembrane protein and of Env polyprotein (prior to its proteolytic cleavage) is essential for their association with host cell membrane lipid rafts. Palmitoylation is therefore required for envelope trafficking to classical lipid rafts, but not for viral replication. Specific enzymatic cleavages in vivo yield mature proteins. Envelope glycoproteins are synthesized as an inactive precursor that is heavily N-glycosylated and processed likely by host cell furin in the Golgi to yield the mature SU and TM proteins. The cleavage site between SU and TM requires the minimal sequence [KR]-X-[KR]-R. About 2 of the 9 disulfide bonds of gp41 are reduced by P4HB/PDI, following binding to CD4 receptor.

Its subcellular location is the virion membrane. The protein localises to the host cell membrane. The protein resides in the host endosome membrane. In terms of biological role, oligomerizes in the host endoplasmic reticulum into predominantly trimers. In a second time, gp160 transits in the host Golgi, where glycosylation is completed. The precursor is then proteolytically cleaved in the trans-Golgi and thereby activated by cellular furin or furin-like proteases to produce gp120 and gp41. Its function is as follows. Attaches the virus to the host lymphoid cell by binding to the primary receptor CD4. This interaction induces a structural rearrangement creating a high affinity binding site for a chemokine coreceptor like CXCR4 and/or CCR5. Acts as a ligand for CD209/DC-SIGN and CLEC4M/DC-SIGNR, which are respectively found on dendritic cells (DCs), and on endothelial cells of liver sinusoids and lymph node sinuses. These interactions allow capture of viral particles at mucosal surfaces by these cells and subsequent transmission to permissive cells. HIV subverts the migration properties of dendritic cells to gain access to CD4+ T-cells in lymph nodes. Virus transmission to permissive T-cells occurs either in trans (without DCs infection, through viral capture and transmission), or in cis (following DCs productive infection, through the usual CD4-gp120 interaction), thereby inducing a robust infection. In trans infection, bound virions remain infectious over days and it is proposed that they are not degraded, but protected in non-lysosomal acidic organelles within the DCs close to the cell membrane thus contributing to the viral infectious potential during DCs' migration from the periphery to the lymphoid tissues. On arrival at lymphoid tissues, intact virions recycle back to DCs' cell surface allowing virus transmission to CD4+ T-cells. Acts as a class I viral fusion protein. Under the current model, the protein has at least 3 conformational states: pre-fusion native state, pre-hairpin intermediate state, and post-fusion hairpin state. During fusion of viral and target intracellular membranes, the coiled coil regions (heptad repeats) assume a trimer-of-hairpins structure, positioning the fusion peptide in close proximity to the C-terminal region of the ectodomain. The formation of this structure appears to drive apposition and subsequent fusion of viral and target cell membranes. Complete fusion occurs in host cell endosomes and is dynamin-dependent, however some lipid transfer might occur at the plasma membrane. The virus undergoes clathrin-dependent internalization long before endosomal fusion, thus minimizing the surface exposure of conserved viral epitopes during fusion and reducing the efficacy of inhibitors targeting these epitopes. Membranes fusion leads to delivery of the nucleocapsid into the cytoplasm. In Human immunodeficiency virus type 1 group M subtype D (isolate Z84) (HIV-1), this protein is Envelope glycoprotein gp160.